We begin with the raw amino-acid sequence, 957 residues long: Glycine dehydrogenase (decarboxylating) (957 aa).

Residue Lys-708 is modified to N6-(pyridoxal phosphate)lysine.

The protein belongs to the GcvP family. As to quaternary structure, the glycine cleavage system is composed of four proteins: P, T, L and H. Pyridoxal 5'-phosphate serves as cofactor.

It carries out the reaction N(6)-[(R)-lipoyl]-L-lysyl-[glycine-cleavage complex H protein] + glycine + H(+) = N(6)-[(R)-S(8)-aminomethyldihydrolipoyl]-L-lysyl-[glycine-cleavage complex H protein] + CO2. In terms of biological role, the glycine cleavage system catalyzes the degradation of glycine. The P protein binds the alpha-amino group of glycine through its pyridoxal phosphate cofactor; CO(2) is released and the remaining methylamine moiety is then transferred to the lipoamide cofactor of the H protein. This chain is Glycine dehydrogenase (decarboxylating), found in Salmonella agona (strain SL483).